We begin with the raw amino-acid sequence, 75 residues long: Large ribosomal subunit protein bL31 (75 aa).

Belongs to the bacterial ribosomal protein bL31 family. Type A subfamily. Part of the 50S ribosomal subunit.

Its function is as follows. Binds the 23S rRNA. In Chlorobium luteolum (strain DSM 273 / BCRC 81028 / 2530) (Pelodictyon luteolum), this protein is Large ribosomal subunit protein bL31.